A 333-amino-acid chain; its full sequence is MLTLTRIRTVSYEVRSTFLFISVLEFAVGFLTNAFVFLVNFWDVVKRQPLSNSDCVLLCLSISRLFLHGLLFLSAIQLTHFQKLSEPLNHSYQAIIMLWMIANQANLWLAACLSLLYCSKLIRFSHTFLICLASWVSRKISQMLLGIILCSCICTVLCVWCFFSRPHFTVTTVLFMNNNTRLNWQIKDLNLFYSFLFCYLWSVPPFLLFLVSSGMLTVSLGRHMRTMKVYIRDSRDPSLEAHIKALKSLVSFFCFFVISSCAAFISVPLLILWRDKIGVMVCVGIMAACPSGHAAVLISGNAKLRRAVTTILLWAQSSLKVRADHKADSRTPC.

Residues 1 to 17 (MLTLTRIRTVSYEVRST) are Extracellular-facing. Residues 18-38 (FLFISVLEFAVGFLTNAFVFL) form a helical membrane-spanning segment. Residues 39–55 (VNFWDVVKRQPLSNSDC) lie on the Cytoplasmic side of the membrane. Residues 56–76 (VLLCLSISRLFLHGLLFLSAI) form a helical membrane-spanning segment. Residues 77-94 (QLTHFQKLSEPLNHSYQA) lie on the Extracellular side of the membrane. Residues 95 to 115 (IIMLWMIANQANLWLAACLSL) traverse the membrane as a helical segment. Over 116–142 (LYCSKLIRFSHTFLICLASWVSRKISQ) the chain is Cytoplasmic. A helical membrane pass occupies residues 143 to 163 (MLLGIILCSCICTVLCVWCFF). Residues 164–190 (SRPHFTVTTVLFMNNNTRLNWQIKDLN) are Extracellular-facing. The N-linked (GlcNAc...) asparagine glycan is linked to Asn-178. A helical membrane pass occupies residues 191 to 211 (LFYSFLFCYLWSVPPFLLFLV). Topologically, residues 212-251 (SSGMLTVSLGRHMRTMKVYIRDSRDPSLEAHIKALKSLVS) are cytoplasmic. Residues 252-272 (FFCFFVISSCAAFISVPLLIL) form a helical membrane-spanning segment. Over 273-276 (WRDK) the chain is Extracellular. Residues 277–297 (IGVMVCVGIMAACPSGHAAVL) traverse the membrane as a helical segment. The Cytoplasmic portion of the chain corresponds to 298-333 (ISGNAKLRRAVTTILLWAQSSLKVRADHKADSRTPC).

The protein belongs to the G-protein coupled receptor T2R family.

It localises to the membrane. In terms of biological role, receptor that may play a role in the perception of bitterness and is gustducin-linked. May play a role in sensing the chemical composition of the gastrointestinal content. The activity of this receptor may stimulate alpha gustducin, mediate PLC-beta-2 activation and lead to the gating of TRPM5. The sequence is that of Taste receptor type 2 member 38 (TAS2R38) from Gorilla gorilla gorilla (Western lowland gorilla).